The primary structure comprises 386 residues: Putative F-box/kelch-repeat protein At4g11750 (386 aa).

Residues proline 5–arginine 51 enclose the F-box domain. Kelch repeat units lie at residues lysine 187–glycine 236, leucine 238–serine 285, and valine 287–glycine 324.

The sequence is that of Putative F-box/kelch-repeat protein At4g11750 from Arabidopsis thaliana (Mouse-ear cress).